We begin with the raw amino-acid sequence, 240 residues long: UDP-2,3-diacylglucosamine hydrolase (240 aa).

Positions 8, 10, 41, 79, and 114 each coordinate Mn(2+). 79–80 (NR) is a substrate binding site. Positions 122, 160, 164, 167, and 195 each coordinate substrate. The Mn(2+) site is built by His-195 and His-197.

It belongs to the LpxH family. Mn(2+) is required as a cofactor.

Its subcellular location is the cell inner membrane. The enzyme catalyses UDP-2-N,3-O-bis[(3R)-3-hydroxytetradecanoyl]-alpha-D-glucosamine + H2O = 2-N,3-O-bis[(3R)-3-hydroxytetradecanoyl]-alpha-D-glucosaminyl 1-phosphate + UMP + 2 H(+). Its pathway is glycolipid biosynthesis; lipid IV(A) biosynthesis; lipid IV(A) from (3R)-3-hydroxytetradecanoyl-[acyl-carrier-protein] and UDP-N-acetyl-alpha-D-glucosamine: step 4/6. Its function is as follows. Hydrolyzes the pyrophosphate bond of UDP-2,3-diacylglucosamine to yield 2,3-diacylglucosamine 1-phosphate (lipid X) and UMP by catalyzing the attack of water at the alpha-P atom. Involved in the biosynthesis of lipid A, a phosphorylated glycolipid that anchors the lipopolysaccharide to the outer membrane of the cell. This chain is UDP-2,3-diacylglucosamine hydrolase, found in Salmonella paratyphi C (strain RKS4594).